The primary structure comprises 180 residues: 3-hydroxyanthranilate 3,4-dioxygenase (180 aa).

Arg44 is an O2 binding site. Fe cation is bound by residues His48, Glu54, and His92. Glu54 lines the substrate pocket. The substrate site is built by Arg96 and Glu106. 4 residues coordinate a divalent metal cation: Cys121, Cys124, Cys158, and Cys161.

It belongs to the 3-HAO family. The cofactor is Fe(2+).

The protein localises to the cytoplasm. It carries out the reaction 3-hydroxyanthranilate + O2 = (2Z,4Z)-2-amino-3-carboxymuconate 6-semialdehyde. It functions in the pathway cofactor biosynthesis; NAD(+) biosynthesis; quinolinate from L-kynurenine: step 3/3. Functionally, catalyzes the oxidative ring opening of 3-hydroxyanthranilate to 2-amino-3-carboxymuconate semialdehyde, which spontaneously cyclizes to quinolinate. This is 3-hydroxyanthranilate 3,4-dioxygenase (bna1) from Neurospora crassa (strain ATCC 24698 / 74-OR23-1A / CBS 708.71 / DSM 1257 / FGSC 987).